Reading from the N-terminus, the 337-residue chain is DNA-directed RNA polymerase subunit alpha (337 aa).

The tract at residues methionine 1–glutamate 233 is alpha N-terminal domain (alpha-NTD). The interval lysine 265–phenylalanine 337 is alpha C-terminal domain (alpha-CTD).

The protein belongs to the RNA polymerase alpha chain family. In terms of assembly, in plastids the minimal PEP RNA polymerase catalytic core is composed of four subunits: alpha, beta, beta', and beta''. When a (nuclear-encoded) sigma factor is associated with the core the holoenzyme is formed, which can initiate transcription.

The protein localises to the plastid. It localises to the chloroplast. The enzyme catalyses RNA(n) + a ribonucleoside 5'-triphosphate = RNA(n+1) + diphosphate. Its function is as follows. DNA-dependent RNA polymerase catalyzes the transcription of DNA into RNA using the four ribonucleoside triphosphates as substrates. The polypeptide is DNA-directed RNA polymerase subunit alpha (Acorus gramineus (Dwarf sweet flag)).